Consider the following 145-residue polypeptide: MSVPDKFFGRYQLDKSENFDEFLSSKGVNWFVRQMIKLAGLTKIISQNQEAGKYNMENLTSKKNTNYQAWELGKKFEAPGLDGNQHEITFDFKDEILSEHHIRLNEPETSAETYFYTIDDQNQLVMRMENNGIVCRRWFKRVEQK.

It belongs to the calycin superfamily. Fatty-acid binding protein (FABP) family.

The polypeptide is Fatty acid-binding protein homolog 4 (lbp-4) (Caenorhabditis elegans).